The primary structure comprises 747 residues: RNA polymerase II assembly factor rtp1 (747 aa).

7 HEAT repeats span residues 37–75 (NYFL…LLGV), 103–141 (QIYN…NCHE), 320–358 (DIIR…VCGT), 381–418 (SQLA…NVDS), 459–485 (EENE…LDLE), 486–523 (NPIS…SKDD), and 557–594 (INPV…KYDD).

This sequence belongs to the Tango6 family. Interacts with RNA polymerase II subunits. Interacts with nuclear pore complex subunits.

It is found in the cytoplasm. The protein resides in the nucleus. Its function is as follows. Required for the cytoplasmic assembly and the nuclear import of RNA polymerase II. This is RNA polymerase II assembly factor rtp1 from Schizosaccharomyces pombe (strain 972 / ATCC 24843) (Fission yeast).